The sequence spans 1936 residues: Probable inactive serine/threonine-protein kinase DDB_G0278909 (1936 aa).

LRR repeat units follow at residues 61 to 82, 83 to 103, 104 to 125, 126 to 147, and 151 to 173; these read LLEK…GHLN, KLKR…QGLS, SLVY…SDCK, KLIN…DHFS, and SLKV…QKKI. An LRRCT domain is found at 191-230; that stretch reads NLIEKKYEEFRLFVINELPKLKYLNWVLISKDERTKASKL. Low complexity-rich tracts occupy residues 253-285 and 293-302; these read NNPN…SSNN and TTTSVSVGSS. 2 disordered regions span residues 253–319 and 347–386; these read NNPN…STSF and KERE…IDET. The segment covering 310 to 319 has biased composition (polar residues); sequence SSPNSRSTSF. HEAT repeat units lie at residues 325–368 and 439–476; these read SVGA…SSSS and QETE…DLLY. Positions 353–373 are enriched in low complexity; it reads QSTSPSSSSLSISSSSQNNNS. Residues 516–526 are compositionally biased toward low complexity; sequence LSSSSSSSSTT. Disordered stretches follow at residues 516–544, 599–620, 660–689, 702–756, and 769–809; these read LSSS…QLDL, NSTL…SPKL, IDQN…INNN, QSIL…PIMK, and QDQP…HFKS. Residues 527-538 are compositionally biased toward pro residues; the sequence is PPQPQLPPPPPQ. HEAT repeat units follow at residues 574–614 and 617–654; these read PVVS…TTPP and SPKL…GSAK. Residues 600-612 are compositionally biased toward low complexity; the sequence is STLSTTPPLSSTT. Residues 660-673 show a composition bias toward polar residues; it reads IDQNTATTPSTPSK. Low complexity predominate over residues 736–756; that stretch reads STTTNTTPTSTPGSPSKPIMK. Positions 774–785 are enriched in pro residues; that stretch reads IVSPPQPQPQPP. Positions 786 to 805 are enriched in low complexity; it reads IVQQKQQQQQQQQQQQQPQQ. One can recognise a Protein kinase domain in the interval 961–1241; it reads IQVGSRLGLG…ISKILSQPFQ (281 aa). Residues 967–975 and lysine 988 contribute to the ATP site; that span reads LGLGSFGDC. Disordered stretches follow at residues 1050-1075 and 1261-1308; these read SHNN…NNNN and NTTI…VKHQ. Low complexity-rich tracts occupy residues 1052–1075, 1266–1282, and 1291–1302; these read NNNN…NNNN, SSSS…VGSV, and NNSNTGSTGSTS. 9 HEAT repeats span residues 1317–1356, 1512–1549, 1553–1590, 1598–1635, 1690–1728, 1739–1775, 1780–1817, 1821–1858, and 1863–1900; these read RKMI…ALKA, FIEE…NQNC, LHNA…DIEF, NCLS…SICS, QSRL…LFSS, SMSV…VNNK, IHMM…SQEC, FLQK…DDSA, and RDNQ…KQIN.

This Dictyostelium discoideum (Social amoeba) protein is Probable inactive serine/threonine-protein kinase DDB_G0278909.